The following is a 501-amino-acid chain: Aldehyde dehydrogenase, cytosolic 1 (501 aa).

S2 bears the N-acetylserine mark. K91 and K128 each carry N6-acetyllysine. Residue 246–251 participates in NAD(+) binding; the sequence is GSTEVG. At K252 the chain carries N6-acetyllysine. E269 (proton acceptor) is an active-site residue. C303 acts as the Nucleophile in catalysis. An N6-acetyllysine mark is found at K353, K367, and K410. A Phosphoserine modification is found at S413. N6-acetyllysine is present on residues K419, K435, and K495.

The protein belongs to the aldehyde dehydrogenase family. In terms of assembly, homotetramer. In terms of tissue distribution, very low levels in lung and liver.

The protein localises to the cytoplasm. It carries out the reaction an aldehyde + NAD(+) + H2O = a carboxylate + NADH + 2 H(+). The protein operates within alcohol metabolism; ethanol degradation; acetate from ethanol: step 2/2. Functionally, can oxidize benzaldehyde, propionaldehyde and acetaldehyde. No detectable activity with retinal. The polypeptide is Aldehyde dehydrogenase, cytosolic 1 (Aldh1a7) (Rattus norvegicus (Rat)).